The primary structure comprises 132 residues: Peptide methionine sulfoxide reductase MsrB (132 aa).

A MsrB domain is found at 8 to 130 (LDSWREELTE…NSASLKLVPR (123 aa)). Residues Cys47, Cys50, Cys96, and Cys99 each contribute to the Zn(2+) site. Cys119 acts as the Nucleophile in catalysis.

The protein belongs to the MsrB Met sulfoxide reductase family. Zn(2+) serves as cofactor.

It catalyses the reaction L-methionyl-[protein] + [thioredoxin]-disulfide + H2O = L-methionyl-(R)-S-oxide-[protein] + [thioredoxin]-dithiol. The sequence is that of Peptide methionine sulfoxide reductase MsrB from Pseudomonas aeruginosa (strain UCBPP-PA14).